Consider the following 252-residue polypeptide: Chitooligosaccharide deacetylase (252 aa).

2 residues coordinate Mg(2+): H61 and H125.

This sequence belongs to the YdjC deacetylase family. ChbG subfamily. As to quaternary structure, homodimer. Mg(2+) is required as a cofactor.

Its subcellular location is the cytoplasm. It carries out the reaction N,N'-diacetylchitobiose + H2O = N-acetyl-beta-D-glucosaminyl-(1-&gt;4)-D-glucosamine + acetate. The catalysed reaction is diacetylchitobiose-6'-phosphate + H2O = N'-monoacetylchitobiose-6'-phosphate + acetate. Its pathway is glycan degradation; chitin degradation. In terms of biological role, involved in the degradation of chitin. ChbG is essential for growth on the acetylated chitooligosaccharides chitobiose and chitotriose but is dispensable for growth on cellobiose and chitosan dimer, the deacetylated form of chitobiose. Deacetylation of chitobiose-6-P and chitotriose-6-P is necessary for both the activation of the chb promoter by the regulatory protein ChbR and the hydrolysis of phosphorylated beta-glucosides by the phospho-beta-glucosidase ChbF. Catalyzes the removal of only one acetyl group from chitobiose-6-P to yield monoacetylchitobiose-6-P, the inducer of ChbR and the substrate of ChbF. This chain is Chitooligosaccharide deacetylase, found in Salmonella enteritidis PT4 (strain P125109).